The primary structure comprises 260 residues: Chloride intracellular channel Clic (260 aa).

Residues 42 to 66 traverse the membrane as a helical segment; it reads FCQEYFMDLYLLAELKTISLKVTTV.

Belongs to the chloride channel CLIC family. In terms of tissue distribution, expressed in cardiac tubes.

The protein resides in the mitochondrion. The protein localises to the membrane. Might insert into membranes and form chloride ion channels. Channel activity depends on the pH. May play a role in ethanol sensitivity. This chain is Chloride intracellular channel Clic, found in Drosophila melanogaster (Fruit fly).